A 508-amino-acid chain; its full sequence is MIGFSAFILRNYYAAIGWNEDNLYSSLTRTSSALLDFQLPQSLILQLANSPTPIFFTSYALDALPQLNGSISYITTSMPLDEIGSGRATAFKNVIERFRVFPPPKRPQPKDEVWLGGKRIEGRDYLLYSRLHLPSLHLSGLATTRLTPTLQAHLAFLSQPAHPTSTRPTPPQTPPSHTRQPSEPSTPAPSPTPGNVFISLQHDTGRYCGEYTYSVQDGMVGLRTLYNFGWHGDEESEVDKKERREREGKRIDEEEMMEGGLKGRFSAGGEVYFSAKQRSFGISTGLRFTTVPPTLPLPLNAPVPSPPTTLTLLYNPLIGFLSSAYSAQVSPTVALATRFGVNVYSYESDLSVGGEWWIGRRRGKRGLTTDAEPQLDAESRDPVVTGIEENRELTEKMAQRASLRQVTLRDEIGEDVHAEKELYSPIPVMTDVNAGELAQQISPRLQPQQDLDDERDGVLKARLSGNWQFALLYEARIRNCLVSAGVLADLTGRQHPIRSIGLEVQYFS.

The tract at residues 160–195 (PAHPTSTRPTPPQTPPSHTRQPSEPSTPAPSPTPGN) is disordered.

Belongs to the MDM10 family. As to quaternary structure, component of the ER-mitochondria encounter structure (ERMES) or MDM complex, composed of MMM1, MDM10, MDM12 and MDM34. Associates with the mitochondrial outer membrane sorting assembly machinery SAM(core) complex.

It localises to the mitochondrion outer membrane. Functionally, component of the ERMES/MDM complex, which serves as a molecular tether to connect the endoplasmic reticulum and mitochondria. Components of this complex are involved in the control of mitochondrial shape and protein biogenesis and may function in phospholipid exchange. MDM10 is involved in the late assembly steps of the general translocase of the mitochondrial outer membrane (TOM complex). Functions in the TOM40-specific route of the assembly of outer membrane beta-barrel proteins, including the association of TOM40 with the receptor TOM22 and small TOM proteins. Can associate with the SAM(core) complex as well as the MDM12-MMM1 complex, both involved in late steps of the major beta-barrel assembly pathway, that is responsible for biogenesis of all outer membrane beta-barrel proteins. May act as a switch that shuttles between both complexes and channels precursor proteins into the TOM40-specific pathway. Plays a role in mitochondrial morphology and in the inheritance of mitochondria. This chain is Mitochondrial distribution and morphology protein 10, found in Cryptococcus neoformans var. neoformans serotype D (strain JEC21 / ATCC MYA-565) (Filobasidiella neoformans).